Consider the following 260-residue polypeptide: Phosphatidylglycerol--prolipoprotein diacylglyceryl transferase (260 aa).

A run of 4 helical transmembrane segments spans residues 17–37 (VVKW…SWIF), 52–72 (LTAA…LHVI), 85–105 (ILSG…IGLW), and 113–133 (FNLG…QAIG). Arg134 provides a ligand contact to a 1,2-diacyl-sn-glycero-3-phospho-(1'-sn-glycerol). Transmembrane regions (helical) follow at residues 170 to 190 (VPTQ…SLFI), 198 to 218 (GQLF…IGFV), and 227 to 247 (GLEQ…PFFI).

Belongs to the Lgt family.

The protein localises to the cell membrane. It catalyses the reaction L-cysteinyl-[prolipoprotein] + a 1,2-diacyl-sn-glycero-3-phospho-(1'-sn-glycerol) = an S-1,2-diacyl-sn-glyceryl-L-cysteinyl-[prolipoprotein] + sn-glycerol 1-phosphate + H(+). The protein operates within protein modification; lipoprotein biosynthesis (diacylglyceryl transfer). Its function is as follows. Catalyzes the transfer of the diacylglyceryl group from phosphatidylglycerol to the sulfhydryl group of the N-terminal cysteine of a prolipoprotein, the first step in the formation of mature lipoproteins. The polypeptide is Phosphatidylglycerol--prolipoprotein diacylglyceryl transferase (Dehalococcoides mccartyi (strain ATCC BAA-2266 / KCTC 15142 / 195) (Dehalococcoides ethenogenes (strain 195))).